The chain runs to 130 residues: MPLSQEESTLIERATATINSIPISEDYSVASAALSSDGRIFTGVNVYHFTGGPCAELVVLGTAAAAAAGNLTCIVAIGNENRGILSPCGRCRQVLLDLHPGIKAVVKDSDGQPTAVGIRELLPSGYMNRA.

A CMP/dCMP-type deaminase domain is found at 1–129 (MPLSQEESTL…ELLPSGYMNR (129 aa)). Substrate is bound at residue S28. C54 is a binding site for Zn(2+). Residue E56 is the Proton donor of the active site. Position 82 (R82) interacts with substrate. Residues C88 and C91 each coordinate Zn(2+). Y126 is a substrate binding site.

The protein belongs to the cytidine and deoxycytidylate deaminase family. As to quaternary structure, homotetramer. Zn(2+) serves as cofactor.

The catalysed reaction is blasticidin S + H2O + H(+) = deaminohydroxyblasticidin S + NH4(+). Catalyzes the deamination of the cytosine moiety of the antibiotics blasticidin S, cytomycin and acetylblasticidin S. The chain is Blasticidin-S deaminase (bsd) from Aspergillus terreus (strain NIH 2624 / FGSC A1156).